Consider the following 128-residue polypeptide: MAPVKKLVAKGGKKKKQVLKFTLDCTHPVEDRIMDEANSEQFLQERIKVNGKARNLGGGAVTIERSKSKITVTSEVPFSKRYLKYLTKKYLKKNNLHDWLRVVANSKESYELRYFQINQDEEEEEDED.

Threonine 62 is subject to Phosphothreonine. Serine 66 carries the phosphoserine modification. Lysine 69 is subject to N6-succinyllysine.

This sequence belongs to the eukaryotic ribosomal protein eL22 family. As to quaternary structure, component of the large ribosomal subunit.

The protein localises to the cytoplasm. Its function is as follows. Component of the large ribosomal subunit. The ribosome is a large ribonucleoprotein complex responsible for the synthesis of proteins in the cell. This is Large ribosomal subunit protein eL22 (RPL22) from Oryctolagus cuniculus (Rabbit).